The primary structure comprises 396 residues: Initiation-specific alpha-1,6-mannosyltransferase (396 aa).

Residues 1–7 (MLRLRLR) lie on the Cytoplasmic side of the membrane. A helical; Signal-anchor for type II membrane protein transmembrane segment spans residues 8–28 (SIVIGAAIAGSILLLFNHGSI). At 29–396 (EGMEDLTEIS…HFFAGSWKDD (368 aa)) the chain is on the lumenal side. Positions 229-231 (DID) match the DXD motif motif. N345 is a glycosylation site (N-linked (GlcNAc...) asparagine).

This sequence belongs to the glycosyltransferase 32 family. Requires Mn(2+) as cofactor.

It is found in the endoplasmic reticulum membrane. Its subcellular location is the golgi apparatus membrane. It carries out the reaction Transfers an alpha-D-mannosyl residue from GDP-mannose into lipid-linked oligosaccharide, forming an alpha-(1-&gt;6)-D-mannosyl-D-mannose linkage.. Functionally, mannosyltransferase involved in outer chain elongation of asparagine-linked oligosaccharides of the type Man(9)GlcNAc(2). May otherwise add the first alpha-1,6-mannose to the Man(8)GlcNAc(2) core oligosaccharide from the ER. Represents the first enzymatic event required for synthesis of outer chain mannose linkages on yeast secretory proteins. This chain is Initiation-specific alpha-1,6-mannosyltransferase, found in Schizosaccharomyces pombe (strain 972 / ATCC 24843) (Fission yeast).